The primary structure comprises 416 residues: ATP-dependent Clp protease ATP-binding subunit ClpX (416 aa).

One can recognise a ClpX-type ZB domain in the interval 1 to 54 (MFKFGDEKGQLKCSFCGKSQEQVRKLVAGPGVYICDECIELCNEIIEEELNDDV). Zn(2+) contacts are provided by Cys-13, Cys-16, Cys-35, and Cys-38. An ATP-binding site is contributed by 117–124 (PTGCGKTL).

It belongs to the ClpX chaperone family. In terms of assembly, component of the ClpX-ClpP complex. Forms a hexameric ring that, in the presence of ATP, binds to fourteen ClpP subunits assembled into a disk-like structure with a central cavity, resembling the structure of eukaryotic proteasomes.

Functionally, ATP-dependent specificity component of the Clp protease. It directs the protease to specific substrates. Can perform chaperone functions in the absence of ClpP. This is ATP-dependent Clp protease ATP-binding subunit ClpX from Halothermothrix orenii (strain H 168 / OCM 544 / DSM 9562).